Consider the following 126-residue polypeptide: Large ribosomal subunit protein bL12 (126 aa).

Belongs to the bacterial ribosomal protein bL12 family. Homodimer. Part of the ribosomal stalk of the 50S ribosomal subunit. Forms a multimeric L10(L12)X complex, where L10 forms an elongated spine to which 2 to 4 L12 dimers bind in a sequential fashion. Binds GTP-bound translation factors.

Functionally, forms part of the ribosomal stalk which helps the ribosome interact with GTP-bound translation factors. Is thus essential for accurate translation. The polypeptide is Large ribosomal subunit protein bL12 (Nitrosospira multiformis (strain ATCC 25196 / NCIMB 11849 / C 71)).